A 217-amino-acid polypeptide reads, in one-letter code: Probable chemoreceptor glutamine deamidase CheD (217 aa).

A disordered region spans residues 194 to 217; the sequence is ATSGTAPSRGGELFTRASASRTPS.

It belongs to the CheD family.

It catalyses the reaction L-glutaminyl-[protein] + H2O = L-glutamyl-[protein] + NH4(+). Probably deamidates glutamine residues to glutamate on methyl-accepting chemotaxis receptors (MCPs), playing an important role in chemotaxis. This is Probable chemoreceptor glutamine deamidase CheD from Cupriavidus pinatubonensis (strain JMP 134 / LMG 1197) (Cupriavidus necator (strain JMP 134)).